A 185-amino-acid polypeptide reads, in one-letter code: Ribosome-recycling factor (185 aa).

This sequence belongs to the RRF family.

It localises to the cytoplasm. Responsible for the release of ribosomes from messenger RNA at the termination of protein biosynthesis. May increase the efficiency of translation by recycling ribosomes from one round of translation to another. In Bacillus cereus (strain ATCC 10987 / NRS 248), this protein is Ribosome-recycling factor.